The chain runs to 59 residues: Preprotein translocase subunit SecG (59 aa).

At 1–33 the chain is on the cytoplasmic side; the sequence is MARRESSGGSGGLMSSAGLMRYFEAEESAIKID. The helical transmembrane segment at 34-55 threads the bilayer; sequence PKTVIIAAVASGAFIWILNFTY. Over 56-59 the chain is Extracellular; the sequence is GRFW.

The protein belongs to the SEC61-beta family. As to quaternary structure, component of the protein translocase complex. Heterotrimer consisting of alpha (SecY), beta (SecG) and gamma (SecE) subunits. Can form oligomers of the heterotrimer.

It is found in the cell membrane. Its function is as follows. Involved in protein export. The function of the beta subunit is unknown, but it may be involved in stabilization of the trimeric complex. This Methanocella arvoryzae (strain DSM 22066 / NBRC 105507 / MRE50) protein is Preprotein translocase subunit SecG.